The chain runs to 435 residues: UPF0597 protein AHA_4077 (435 aa).

It belongs to the UPF0597 family.

In Aeromonas hydrophila subsp. hydrophila (strain ATCC 7966 / DSM 30187 / BCRC 13018 / CCUG 14551 / JCM 1027 / KCTC 2358 / NCIMB 9240 / NCTC 8049), this protein is UPF0597 protein AHA_4077.